The primary structure comprises 168 residues: 2-C-methyl-D-erythritol 2,4-cyclodiphosphate synthase (168 aa).

A divalent metal cation contacts are provided by aspartate 13 and histidine 15. Residues 13 to 15 and 39 to 40 contribute to the 4-CDP-2-C-methyl-D-erythritol 2-phosphate site; these read DVH and HS. Histidine 47 serves as a coordination point for a divalent metal cation. Residues 61–63, 66–70, phenylalanine 144, and lysine 147 each bind 4-CDP-2-C-methyl-D-erythritol 2-phosphate; these read DIG and FPDTD.

Belongs to the IspF family. In terms of assembly, homotrimer. Requires a divalent metal cation as cofactor.

The catalysed reaction is 4-CDP-2-C-methyl-D-erythritol 2-phosphate = 2-C-methyl-D-erythritol 2,4-cyclic diphosphate + CMP. The protein operates within isoprenoid biosynthesis; isopentenyl diphosphate biosynthesis via DXP pathway; isopentenyl diphosphate from 1-deoxy-D-xylulose 5-phosphate: step 4/6. Functionally, involved in the biosynthesis of isopentenyl diphosphate (IPP) and dimethylallyl diphosphate (DMAPP), two major building blocks of isoprenoid compounds. Catalyzes the conversion of 4-diphosphocytidyl-2-C-methyl-D-erythritol 2-phosphate (CDP-ME2P) to 2-C-methyl-D-erythritol 2,4-cyclodiphosphate (ME-CPP) with a corresponding release of cytidine 5-monophosphate (CMP). In Ralstonia pickettii (strain 12J), this protein is 2-C-methyl-D-erythritol 2,4-cyclodiphosphate synthase.